Reading from the N-terminus, the 445-residue chain is Transcription termination factor MTERF15, mitochondrial (445 aa).

The N-terminal 25 residues, 1–25 (MASKLKTFINLRDYPITLFNQIRSL), are a transit peptide targeting the mitochondrion.

The protein belongs to the mTERF family.

It is found in the mitochondrion. Its function is as follows. Transcription termination factor required for mitochondrial NAD2 intron 3 splicing and normal membrane respiratory chain Complex I activity. Essential for normal plant growth and development. Binds to RNA but not to double-stranded DNA. In Arabidopsis thaliana (Mouse-ear cress), this protein is Transcription termination factor MTERF15, mitochondrial.